Reading from the N-terminus, the 498-residue chain is Cystathionine beta-synthase (498 aa).

Positions 1-25 are disordered; it reads MSAPEGPSKCTWTPNTTENTPHTTR. A compositionally biased stretch (low complexity) spans 11–22; the sequence is TWTPNTTENTPH. Position 73 is an N6-(pyridoxal phosphate)lysine (lysine 73). Pyridoxal 5'-phosphate-binding positions include asparagine 103, 210-214, and serine 302; that span reads GTGGT. CBS domains follow at residues 374–430 and 435–497; these read TLPK…KKAV and VSKV…SQQK.

This sequence belongs to the cysteine synthase/cystathionine beta-synthase family. Pyridoxal 5'-phosphate is required as a cofactor.

It catalyses the reaction L-homocysteine + L-serine = L,L-cystathionine + H2O. It functions in the pathway amino-acid biosynthesis; L-cysteine biosynthesis; L-cysteine from L-homocysteine and L-serine: step 1/2. The protein is Cystathionine beta-synthase (cysB) of Dictyostelium discoideum (Social amoeba).